Consider the following 283-residue polypeptide: Polyamine aminopropyltransferase (283 aa).

One can recognise a PABS domain in the interval 2–237 (ELWYTEEHTD…GHWLFGFASK (236 aa)). S-methyl-5'-thioadenosine is bound at residue Gln-31. His-62 and Asp-86 together coordinate spermidine. S-methyl-5'-thioadenosine is bound by residues Glu-106 and 137 to 138 (DG). Asp-155 serves as the catalytic Proton acceptor. 155-158 (DSTD) lines the spermidine pocket. S-methyl-5'-thioadenosine is bound at residue Pro-162.

Belongs to the spermidine/spermine synthase family. As to quaternary structure, homodimer or homotetramer.

It is found in the cytoplasm. It carries out the reaction S-adenosyl 3-(methylsulfanyl)propylamine + putrescine = S-methyl-5'-thioadenosine + spermidine + H(+). It functions in the pathway amine and polyamine biosynthesis; spermidine biosynthesis; spermidine from putrescine: step 1/1. In terms of biological role, catalyzes the irreversible transfer of a propylamine group from the amino donor S-adenosylmethioninamine (decarboxy-AdoMet) to putrescine (1,4-diaminobutane) to yield spermidine. In Clostridium perfringens (strain SM101 / Type A), this protein is Polyamine aminopropyltransferase.